The primary structure comprises 373 residues: Chaperone protein DnaJ (373 aa).

One can recognise a J domain in the interval 5–69 (DYYEVLGVNK…NKRANYDQFG (65 aa)). A CR-type zinc finger spans residues 130–212 (GTKKEISIKK…CKGKGTENKT (83 aa)). 8 residues coordinate Zn(2+): Cys143, Cys146, Cys160, Cys163, Cys186, Cys189, Cys200, and Cys203. 4 CXXCXGXG motif repeats span residues 143–150 (CHTCNGDG), 160–167 (CSYCNGAG), 186–193 (CPKCEGSG), and 200–207 (CPTCKGKG).

The protein belongs to the DnaJ family. In terms of assembly, homodimer. It depends on Zn(2+) as a cofactor.

The protein localises to the cytoplasm. Its function is as follows. Participates actively in the response to hyperosmotic and heat shock by preventing the aggregation of stress-denatured proteins and by disaggregating proteins, also in an autonomous, DnaK-independent fashion. Unfolded proteins bind initially to DnaJ; upon interaction with the DnaJ-bound protein, DnaK hydrolyzes its bound ATP, resulting in the formation of a stable complex. GrpE releases ADP from DnaK; ATP binding to DnaK triggers the release of the substrate protein, thus completing the reaction cycle. Several rounds of ATP-dependent interactions between DnaJ, DnaK and GrpE are required for fully efficient folding. Also involved, together with DnaK and GrpE, in the DNA replication of plasmids through activation of initiation proteins. In Staphylococcus epidermidis (strain ATCC 12228 / FDA PCI 1200), this protein is Chaperone protein DnaJ.